We begin with the raw amino-acid sequence, 902 residues long: Glutamate receptor 4 (902 aa).

An N-terminal signal peptide occupies residues 1-20 (MRIICRQIVLLFSGFWGLAM). The Extracellular segment spans residues 22 to 544 (AFPSSVQIGG…GVFSFLDPLA (523 aa)). N-linked (GlcNAc...) asparagine glycosylation is found at Asn52, Asn56, Asn258, Asn371, Asn407, and Asn414. A disulfide bond links Cys84 and Cys331. L-glutamate contacts are provided by Pro500, Thr502, and Arg507. A helical membrane pass occupies residues 545–565 (YEIWMCIVFAYIGVSVVLFLV). Topologically, residues 566–592 (SRFSPYEWHTEEPEDGKEGPSDQPPNE) are cytoplasmic. Residues 593 to 608 (FGIFNSLWFSLGAFMQ) constitute an intramembrane region (helical; Pore-forming). An intramembrane segment occupies 609–611 (QGC). Cys611 carries S-palmitoyl cysteine lipidation. At 612–617 (DISPRS) the chain is on the cytoplasmic side. Residues 618-638 (LSGRIVGGVWWFFTLIIISSY) traverse the membrane as a helical segment. Residues 639–813 (TANLAAFLTV…DKTSALSLSN (175 aa)) are Extracellular-facing. The L-glutamate site is built by Ser676, Thr677, and Glu727. Cys740 and Cys795 are joined by a disulfide. A helical transmembrane segment spans residues 814–834 (VAGVFYILVGGLGLAMLVALI). Residues 835 to 902 (EFCYKSRAEA…GLAVIASDLP (68 aa)) lie on the Cytoplasmic side of the membrane. A lipid anchor (S-palmitoyl cysteine) is attached at Cys837. Ser862 bears the Phosphoserine; by PKC/PRKCG mark.

This sequence belongs to the glutamate-gated ion channel (TC 1.A.10.1) family. GRIA4 subfamily. In terms of assembly, homotetramer or heterotetramer of pore-forming glutamate receptor subunits. Tetramers may be formed by the dimerization of dimers. Interacts with EPB41L1 via its C-terminus. Isoform 3 interacts with PICK1. Found in a complex with GRIA1, GRIA2, GRIA3, CNIH2, CNIH3, CACNG2, CACNG3, CACNG4, CACNG5, CACNG7 and CACNG8. Interacts with CACNG5 and PRKCG. Found in a complex with GRIA1, GRIA2, GRIA3, DLG4, CACNG8 and CNIH2. In terms of processing, palmitoylated. Depalmitoylated upon L-glutamate stimulation. ZDHHC3/GODZ specifically palmitoylates Cys-611, which leads to Golgi retention and decreased cell surface expression. In contrast, Cys-837 palmitoylation does not affect cell surface expression but regulates stimulation-dependent endocytosis. Phosphorylated at Ser-862 by PRKCG; phosphorylation increases plasma membrane-associated GRI4 expression. In terms of tissue distribution, detected in cerebellum.

Its subcellular location is the cell membrane. The protein resides in the postsynaptic cell membrane. The protein localises to the cell projection. It localises to the dendrite. The enzyme catalyses Ca(2+)(in) = Ca(2+)(out). It carries out the reaction Na(+)(in) = Na(+)(out). It catalyses the reaction Mg(2+)(in) = Mg(2+)(out). Functionally, ionotropic glutamate receptor that functions as a ligand-gated cation channel, gated by L-glutamate and glutamatergic agonists such as alpha-amino-3-hydroxy-5-methyl-4-isoxazolepropionic acid (AMPA), quisqualic acid, and kainic acid. L-glutamate acts as an excitatory neurotransmitter at many synapses in the central nervous system and plays an important role in fast excitatory synaptic transmission. Binding of the excitatory neurotransmitter L-glutamate induces a conformation change, leading to the opening of the cation channel, and thereby converts the chemical signal to an electrical impulse upon entry of monovalent and divalent cations such as sodium and calcium. The receptor then desensitizes rapidly and enters a transient inactive state, characterized by the presence of bound agonist. In the presence of CACNG8, shows resensitization which is characterized by a delayed accumulation of current flux upon continued application of L-glutamate. The polypeptide is Glutamate receptor 4 (Rattus norvegicus (Rat)).